Here is a 366-residue protein sequence, read N- to C-terminus: Inhibin alpha chain (366 aa).

The first 20 residues, 1–20 (MVIQPSLLLLLLLTLQDVDS), serve as a signal peptide directing secretion. A propeptide spanning residues 21 to 63 (CQGPELVRELVLAKVKALFLDALGPPAMDGEGGGPGIRRLPRR) is cleaved from the precursor. A propeptide spans 64-233 (HALGGFMHRT…APSAGERARR (170 aa)) (inhibin alpha N-terminal region). N-linked (GlcNAc...) asparagine glycosylation is found at asparagine 147 and asparagine 269. 3 cysteine pairs are disulfide-bonded: cysteine 263–cysteine 328, cysteine 292–cysteine 363, and cysteine 296–cysteine 365.

It belongs to the TGF-beta family. As to quaternary structure, dimeric, linked by one or more disulfide bonds. Activin B is a dimer of alpha and beta-B. Inhibin A is a dimer of alpha and beta-A. Inhibin B is a dimer of alpha and beta-B. Interacts with TGFBR3L; this interaction regulates female fertility. Proteolytic processing yields a number of bioactive forms, consisting either solely of the mature alpha chain, of the most N-terminal propeptide linked through a disulfide bond to the mature alpha chain, or of the entire proprotein. In terms of tissue distribution, mainly expressed in ovary and testis. Alpha- and beta-B-subunits are the predominant forms found in testis. Also found in placenta, pituitary, adrenal gland, bone marrow, kidney, spinal cord and brain.

Its subcellular location is the secreted. In terms of biological role, inhibins and activins inhibit and activate, respectively, the secretion of follitropin by the pituitary gland. Inhibins/activins are involved in regulating a number of diverse functions such as hypothalamic and pituitary hormone secretion, gonadal hormone secretion, germ cell development and maturation, erythroid differentiation, insulin secretion, nerve cell survival, embryonic axial development or bone growth, depending on their subunit composition. Inhibins appear to oppose the functions of activins. Functionally, inhibin A is a dimer of alpha/INHA and beta-A/INHBA that functions as a feedback regulator in the hypothalamic-pituitary-gonadal (HPG) axis. Inhibits the secretion of FSH from the anterior pituitary gland by acting on pituitary gonadotrope cells. Antagonizes activin A by binding to the proteoglycan, betaglycan, and forming a stable complex with and, thereby, sequestering type II activin receptors while excluding type I receptor. Its function is as follows. Inhibin B is a dimer of alpha and beta-B that plays a crucial role in the regulation of the reproductive system by inhibiting the secretion of follicle-stimulating hormone (FSH) from the anterior pituitary gland. Thereby, maintains reproductive homeostasis in both males and females. Acts as a more potent suppressor of FSH release than inhibin A. Functions as competitive receptor antagonist binding activin type II receptors with high affinity in the presence of the TGF-beta type III coreceptor/TGFBR3L. The protein is Inhibin alpha chain (Inha) of Rattus norvegicus (Rat).